Consider the following 420-residue polypeptide: 2',3'-cyclic-nucleotide 3'-phosphodiesterase (420 aa).

Serine 9 is subject to Phosphoserine. At tyrosine 110 the chain carries Phosphotyrosine. Serine 169, serine 227, and serine 239 each carry phosphoserine. Residue histidine 250 is the Proton acceptor of the active site. A substrate-binding site is contributed by threonine 252. The Proton donor role is filled by histidine 329. Residue threonine 331 coordinates substrate. The residue at position 358 (serine 358) is a Phosphoserine. Cysteine methyl ester is present on cysteine 417. Residue cysteine 417 is the site of S-farnesyl cysteine attachment. Residues 418–420 (TII) constitute a propeptide, removed in mature form.

It belongs to the 2H phosphoesterase superfamily. CNPase family. In terms of assembly, exists as monomers and homodimers.

The protein localises to the membrane. It localises to the melanosome. It catalyses the reaction a nucleoside 2',3'-cyclic phosphate + H2O = a nucleoside 2'-phosphate + H(+). Its function is as follows. Catalyzes the formation of 2'-nucleotide products from 2',3'-cyclic substrates. May participate in RNA metabolism in the myelinating cell, CNP is the third most abundant protein in central nervous system myelin. This Mus musculus (Mouse) protein is 2',3'-cyclic-nucleotide 3'-phosphodiesterase.